A 61-amino-acid polypeptide reads, in one-letter code: Bowman-Birk type proteinase inhibitor (61 aa).

Intrachain disulfides connect cysteine 4–cysteine 57, cysteine 5–cysteine 20, cysteine 8–cysteine 53, cysteine 10–cysteine 18, cysteine 27–cysteine 34, cysteine 31–cysteine 46, and cysteine 36–cysteine 44.

This sequence belongs to the Bowman-Birk serine protease inhibitor family.

Its function is as follows. Strong inhibitor of trypsin with a 1:1 stoichiometry. Weaker inhibitor of chymotrypsin. The sequence is that of Bowman-Birk type proteinase inhibitor from Erythrina variegata (Indian coral tree).